A 357-amino-acid polypeptide reads, in one-letter code: Histidinol-phosphate aminotransferase (357 aa).

Lys-222 carries the post-translational modification N6-(pyridoxal phosphate)lysine.

This sequence belongs to the class-II pyridoxal-phosphate-dependent aminotransferase family. Histidinol-phosphate aminotransferase subfamily. In terms of assembly, homodimer. It depends on pyridoxal 5'-phosphate as a cofactor.

The enzyme catalyses L-histidinol phosphate + 2-oxoglutarate = 3-(imidazol-4-yl)-2-oxopropyl phosphate + L-glutamate. It participates in amino-acid biosynthesis; L-histidine biosynthesis; L-histidine from 5-phospho-alpha-D-ribose 1-diphosphate: step 7/9. This chain is Histidinol-phosphate aminotransferase, found in Leuconostoc mesenteroides subsp. mesenteroides (strain ATCC 8293 / DSM 20343 / BCRC 11652 / CCM 1803 / JCM 6124 / NCDO 523 / NBRC 100496 / NCIMB 8023 / NCTC 12954 / NRRL B-1118 / 37Y).